Reading from the N-terminus, the 514-residue chain is Maturase K (514 aa).

This sequence belongs to the intron maturase 2 family. MatK subfamily.

It localises to the plastid. It is found in the chloroplast. In terms of biological role, usually encoded in the trnK tRNA gene intron. Probably assists in splicing its own and other chloroplast group II introns. The protein is Maturase K of Plantago argentea (Silver plantain).